The primary structure comprises 220 residues: MSSLSKEAALVHEALLARGLETPLRGEPLARDTRKAQIEAHMTEVMRLLNLDLSDDSLVETPSRIAKMYVDEIFSGLDYANFPKITIIENKMDVDEMVTVRDITLTSTCEHHFVTIDGKATVAYIPKERVIGLSKINRIVRFFAQRPQVQERLTQQILVALQTLLGTKNVAVSIDAVHYCVKARGVRDATSATTTTSLGGLFKTSQNTRQEFLRAVRHHV.

C109, H112, and C180 together coordinate Zn(2+).

The protein belongs to the GTP cyclohydrolase I family. Homomer.

The enzyme catalyses GTP + H2O = 7,8-dihydroneopterin 3'-triphosphate + formate + H(+). It participates in cofactor biosynthesis; 7,8-dihydroneopterin triphosphate biosynthesis; 7,8-dihydroneopterin triphosphate from GTP: step 1/1. The sequence is that of GTP cyclohydrolase 1 from Edwardsiella ictaluri (strain 93-146).